Here is a 247-residue protein sequence, read N- to C-terminus: UDP-N-acetyl-D-mannosaminuronic acid transferase (247 aa).

It belongs to the glycosyltransferase 26 family.

It carries out the reaction UDP-N-acetyl-alpha-D-mannosaminouronate + N-acetyl-alpha-D-glucosaminyl-di-trans,octa-cis-undecaprenyl diphosphate = beta-D-ManNAcA-(1-&gt;4)-alpha-D-GlcNAc-di-trans,octa-cis-undecaprenyl diphosphate + UDP + H(+). It participates in bacterial outer membrane biogenesis; enterobacterial common antigen biosynthesis. Its function is as follows. Catalyzes the synthesis of Und-PP-GlcNAc-ManNAcA (Lipid II), the second lipid-linked intermediate involved in enterobacterial common antigen (ECA) synthesis. In Enterobacter sp. (strain 638), this protein is UDP-N-acetyl-D-mannosaminuronic acid transferase.